The primary structure comprises 354 residues: Opsin-5 (354 aa).

Over 1–33 (MALNHTALPQDERLPHYLRDGDPFASKLSWEAD) the chain is Extracellular. An N-linked (GlcNAc...) asparagine glycan is attached at asparagine 4. The chain crosses the membrane as a helical span at residues 34-54 (LVAGFYLTIIGILSTFGNGYV). The Cytoplasmic portion of the chain corresponds to 55 to 74 (LYMSSRRKKKLRPAEIMTIN). The chain crosses the membrane as a helical span at residues 75–95 (LAVCDLGISVVGKPFTIISCF). The Extracellular segment spans residues 96-108 (CHRWVFGWIGCRW). An intrachain disulfide couples cysteine 106 to cysteine 183. A helical transmembrane segment spans residues 109–129 (YGWAGFFFGCGSLITMTAVSL). The Cytoplasmic portion of the chain corresponds to 130 to 150 (DRYLKICYLSYGVWLKRKHAY). Residues 151-171 (ICLAAIWAYASFWTTMPLVGL) form a helical membrane-spanning segment. The Extracellular portion of the chain corresponds to 172-197 (GDYVPEPFGTSCTLDWWLAQASVGGQ). Residues 198-218 (VFILNILFFCLLLPTAVIVFS) traverse the membrane as a helical segment. Residues 219–252 (YVKIIAKVKSSSKEVAHFDSRIHSSHVLEMKLTK) are Cytoplasmic-facing. Residues 253–273 (VAMLICAGFLIAWIPYAVVSV) form a helical membrane-spanning segment. Over 274–288 (WSAFGRPDSIPIQLS) the chain is Extracellular. Residues 289–309 (VVPTLLAKSAAMYNPIIYQVI) form a helical membrane-spanning segment. Position 296 is an N6-(retinylidene)lysine (lysine 296). Over 310 to 353 (DYKFACCQTGGLKATKKKSLEGFRLHTVTTVRKSSAVLEIHEEW) the chain is Cytoplasmic. Residues cysteine 315 and cysteine 316 are each lipidated (S-palmitoyl cysteine).

This sequence belongs to the G-protein coupled receptor 1 family. Opsin subfamily. It is uncertain whether Cys-315 or Cys-316 is palmitoylated. In terms of tissue distribution, detected in brain and retina and cell lines derived from neural retina.

It localises to the cell membrane. In terms of biological role, G-protein coupled receptor which selectively activates G(i) type G proteins via ultraviolet A (UVA) light-mediated activation in the retina. Preferentially binds the chromophore 11-cis retinal and is a bistable protein that displays emission peaks at 380 nm (UVA light) and 470 nm (blue light). Required for the light-response in the inner plexiform layer, and contributes to the regulation of the light-response in the nerve fiber layer, via phosphorylated DAT/SLC6A3 dopamine uptake. Involved in local corneal and retinal circadian rhythm photoentrainment via modulation of the UVA light-induced phase-shift of the retina clock. Acts as a circadian photoreceptor in the outer ear, via modulation of circadian clock-gene expression in response to violet light during the light-to-dark transition phase and night phase of the circadian cycle. Required in the retina to negatively regulate hyaloid vessel regression during postnatal development via light-dependent OPN5-SLC32A1-DRD2-VEGFR2 signaling. Involved in the light-dependent regulation of retina and vitreous compartment dopamine levels. In Homo sapiens (Human), this protein is Opsin-5 (OPN5).